We begin with the raw amino-acid sequence, 90 residues long: Large ribosomal subunit protein bL27 (90 aa).

The segment at 1 to 20 (MAHKKAGGSSRNGRDSAGKR) is disordered.

It belongs to the bacterial ribosomal protein bL27 family.

The protein is Large ribosomal subunit protein bL27 of Rhodopseudomonas palustris (strain BisB18).